Here is a 407-residue protein sequence, read N- to C-terminus: Argininosuccinate synthase (407 aa).

ATP-binding positions include 11 to 19 (AYSGGLDTS) and A39. 2 residues coordinate L-citrulline: Y90 and S95. G120 lines the ATP pocket. Residues T122, N126, and D127 each coordinate L-aspartate. An L-citrulline-binding site is contributed by N126. The L-citrulline site is built by R130, S179, S188, E264, and Y276.

Belongs to the argininosuccinate synthase family. Type 1 subfamily. Homotetramer.

Its subcellular location is the cytoplasm. It catalyses the reaction L-citrulline + L-aspartate + ATP = 2-(N(omega)-L-arginino)succinate + AMP + diphosphate + H(+). Its pathway is amino-acid biosynthesis; L-arginine biosynthesis; L-arginine from L-ornithine and carbamoyl phosphate: step 2/3. The chain is Argininosuccinate synthase from Roseiflexus sp. (strain RS-1).